Reading from the N-terminus, the 125-residue chain is MSFLRPTLALLAVTALVTTSAQMNGYTKKEVTPEDMELLQKAQSNVSAYNRDVTSRICYLKVDSLETQVVSGESYKFHVSGCGVNSDKELGGCANQNCESSKYDIVIYSQSWTNTLEVTSITPAN.

Positions 1–21 (MSFLRPTLALLAVTALVTTSA) are cleaved as a signal peptide. Asparagine 45 carries N-linked (GlcNAc...) asparagine glycosylation. The Secondary area of contact motif lies at 68–72 (QVVSG).

This sequence belongs to the cystatin family.

The protein localises to the secreted. Functionally, secreted effector that interacts with and inhibits host apoplastic pathogenesis-related papain-like cysteine proteases. Inhibition of host proteases by a pathogen extracellular protease inhibitor forms a specific type of defense-counterdefense mechanism between plants and microbial pathogens. The polypeptide is Cystatin-like cysteine protease inhibitor EPIC2A (Phytophthora infestans (strain T30-4) (Potato late blight agent)).